The primary structure comprises 197 residues: Baseplate puncturing device gp45 (197 aa).

A disordered region spans residues 172 to 197 (DAIINGKSTDKHIHRGDSGGTTGPMQ). Basic and acidic residues predominate over residues 179 to 188 (STDKHIHRGD). Fe cation-binding residues include histidine 183 and histidine 185. Residues aspartate 188 and serine 189 each contribute to the Ca(2+) site. Aspartate 188 is a chloride binding site.

As to quaternary structure, homotrimer. Part of a complex composed of three DNA circularization protein N, three baseplate hub protein gp44 and three sub-complex wedge (made of two copies of each baseplate protein gp46, gp47 and gp48) that forms the baseplate. Requires Ca(2+) as cofactor. The cofactor is chloride. It depends on Fe cation as a cofactor.

Its subcellular location is the virion. The protein resides in the host cytoplasm. Its function is as follows. Component of the baseplate that forms a central needlelike spike used to puncture the host cell membrane for tube insertion during virus entry. Probably involved in baseplate and tail assembly. Serves as the distal plug of tail tube channel and might regulate the process of the phage DNA and protein ejection into the host cell. This chain is Baseplate puncturing device gp45, found in Escherichia phage Mu (Bacteriophage Mu).